The primary structure comprises 395 residues: NADH-quinone oxidoreductase subunit D (395 aa).

The protein belongs to the complex I 49 kDa subunit family. In terms of assembly, NDH-1 is composed of 14 different subunits. Subunits NuoB, C, D, E, F, and G constitute the peripheral sector of the complex.

It is found in the cell inner membrane. The catalysed reaction is a quinone + NADH + 5 H(+)(in) = a quinol + NAD(+) + 4 H(+)(out). Its function is as follows. NDH-1 shuttles electrons from NADH, via FMN and iron-sulfur (Fe-S) centers, to quinones in the respiratory chain. The immediate electron acceptor for the enzyme in this species is believed to be ubiquinone. Couples the redox reaction to proton translocation (for every two electrons transferred, four hydrogen ions are translocated across the cytoplasmic membrane), and thus conserves the redox energy in a proton gradient. This chain is NADH-quinone oxidoreductase subunit D, found in Anaplasma phagocytophilum (strain HZ).